We begin with the raw amino-acid sequence, 366 residues long: Ferredoxin--NADP reductase, leaf isozyme 2, chloroplastic (366 aa).

A chloroplast-targeting transit peptide spans 1–48 (MAAVNTVSSLPCSKAGAAVAGGAPRPSTCSVFYPPRCWSKRSSGNGVR). The FAD-binding FR-type domain occupies 87-209 (KEPYTGRCLL…TGPVGKEMLM (123 aa)). Residues 145-148 (RLYS), 166-168 (CVK), Tyr-172, and 183-185 (VCS) each bind FAD. Positions 148 and 168 each coordinate NADP(+). Residues Cys-184 and Cys-189 are joined by a disulfide bond. At Ser-185 the chain carries Phosphoserine. Thr-216 carries the phosphothreonine modification. Residue Thr-224 coordinates FAD. Residues Thr-224, 256 to 257 (VP), 286 to 287 (SR), Lys-296, 325 to 326 (GL), and Glu-364 contribute to the NADP(+) site.

Belongs to the ferredoxin--NADP reductase type 1 family. In terms of assembly, heterodimer with LFNR1. Component of high molecular weight thylakoid LFNRs-containing protein complexes containing LIR1, LFNR1, LFNR2, TIC62 and TROL proteins. Interacts directly with LIR1 and TIC62; LIR1 increases the affinity of LFNR1 and LFNR2 for TIC62. Requires FAD as cofactor. In terms of processing, may form interchain disulfide bonds with LIR1.

The protein resides in the plastid. The protein localises to the chloroplast stroma. It is found in the chloroplast thylakoid membrane. The catalysed reaction is 2 reduced [2Fe-2S]-[ferredoxin] + NADP(+) + H(+) = 2 oxidized [2Fe-2S]-[ferredoxin] + NADPH. Its pathway is energy metabolism; photosynthesis. Plays a key role in regulating the relative amounts of cyclic and non-cyclic electron flow to meet the demands of the plant for ATP and reducing power. The chain is Ferredoxin--NADP reductase, leaf isozyme 2, chloroplastic from Oryza sativa subsp. japonica (Rice).